A 172-amino-acid chain; its full sequence is 3-hydroxydecanoyl-[acyl-carrier-protein] dehydratase (172 aa).

His71 is an active-site residue.

The protein belongs to the thioester dehydratase family. FabA subfamily. In terms of assembly, homodimer.

It is found in the cytoplasm. The enzyme catalyses a (3R)-hydroxyacyl-[ACP] = a (2E)-enoyl-[ACP] + H2O. The catalysed reaction is (3R)-hydroxydecanoyl-[ACP] = (2E)-decenoyl-[ACP] + H2O. It catalyses the reaction (2E)-decenoyl-[ACP] = (3Z)-decenoyl-[ACP]. Its pathway is lipid metabolism; fatty acid biosynthesis. Functionally, necessary for the introduction of cis unsaturation into fatty acids. Catalyzes the dehydration of (3R)-3-hydroxydecanoyl-ACP to E-(2)-decenoyl-ACP and then its isomerization to Z-(3)-decenoyl-ACP. Can catalyze the dehydratase reaction for beta-hydroxyacyl-ACPs with saturated chain lengths up to 16:0, being most active on intermediate chain length. The polypeptide is 3-hydroxydecanoyl-[acyl-carrier-protein] dehydratase (Vibrio parahaemolyticus serotype O3:K6 (strain RIMD 2210633)).